We begin with the raw amino-acid sequence, 384 residues long: Mannitol-1-phosphate 5-dehydrogenase (384 aa).

Residue 4-15 (AVHFGAGNIGRG) coordinates NAD(+).

This sequence belongs to the mannitol dehydrogenase family.

It catalyses the reaction D-mannitol 1-phosphate + NAD(+) = beta-D-fructose 6-phosphate + NADH + H(+). The polypeptide is Mannitol-1-phosphate 5-dehydrogenase (Lacticaseibacillus paracasei (strain ATCC 334 / BCRC 17002 / CCUG 31169 / CIP 107868 / KCTC 3260 / NRRL B-441) (Lactobacillus paracasei)).